The chain runs to 461 residues: Flavin-containing monooxygenase FMO GS-OX-like 8 (461 aa).

20–25 contacts FAD; that stretch reads GAGPSG. 220-225 serves as a coordination point for NADP(+); that stretch reads GCSMSG.

The protein belongs to the FMO family. Interacts with EER5. Requires FAD as cofactor.

Functionally, catalyzes the conversion of methylthioalkyl glucosinolates of any chain length into methylsulfinylalkyl glucosinolates. This is Flavin-containing monooxygenase FMO GS-OX-like 8 from Arabidopsis thaliana (Mouse-ear cress).